A 1207-amino-acid chain; its full sequence is RNA-binding protein 20 (1207 aa).

The disordered stretch occupies residues 1-58; it reads MVLAAAMSQDADPSGPEQPDRDACIVPGVQGPPAPQGQQGMQPLPPPLPPPPQPQSSL. A compositionally biased stretch (pro residues) spans 43–54; that stretch reads PLPPPLPPPPQP. The U1-type zinc finger occupies 412 to 446; the sequence is HLPHICSICDKKVFDLKDWELHVKGKLHAQKCLLF. Positions 521–596 constitute an RRM domain; the sequence is RVVHICNLPE…EKLLIRMSTR (76 aa). Over residues 625 to 637 the composition is skewed to basic and acidic residues; that stretch reads LREADRYGPERPR. Disordered stretches follow at residues 625-686, 722-896, and 951-1110; these read LREA…NGED, EKYL…MEEL, and QGET…AELK. The tract at residues 631–650 is RS; sequence YGPERPRSRSPMSRSLSPRS. Ser638, Ser640, Ser643, Ser645, and Ser652 each carry phosphoserine. Over residues 639–650 the composition is skewed to low complexity; sequence RSPMSRSLSPRS. The span at 668 to 686 shows a compositional bias: basic and acidic residues; the sequence is YAWRDEDRETVPRRENGED. Ser729 is subject to Phosphoserine. Composition is skewed to basic and acidic residues over residues 740-759, 772-789, and 796-836; these read KGRE…DKHP, RKEE…PEDS, and EPKV…RGAE. Position 789 is a phosphoserine (Ser789). Over residues 839–848 the composition is skewed to acidic residues; the sequence is AGTEEQEGME. 2 positions are modified to phosphoserine: Ser853 and Ser864. Residues 853-863 show a composition bias toward polar residues; it reads SVGTQQEGTES. Residues 867-876 are compositionally biased toward basic and acidic residues; that stretch reads ENTRTKKGQD. Phosphoserine occurs at positions 879, 881, and 963. Over residues 970–979 the composition is skewed to polar residues; it reads VPSTSTSCPN. Ser999 is modified (phosphoserine). The span at 1011–1022 shows a compositional bias: basic and acidic residues; the sequence is YEKEARGAEGSD. A phosphoserine mark is found at Ser1034, Ser1046, Ser1057, Ser1066, Ser1078, Ser1096, and Ser1101. Residues 1050–1072 are compositionally biased toward basic and acidic residues; it reads DDCKARGSPEDGPHEVSPLEEKA. Positions 1073–1102 are enriched in polar residues; that stretch reads SPTTESDLQSQACQENSRYTETRSLNSRSP. A Matrin-type zinc finger spans residues 1141–1172; it reads FYCKLCGLFYTSEEAAKVSHCRSTVHYRNLQK. The segment at 1181–1207 is disordered; sequence GLKETEGVDSPSPERSGIGPHLERKKL. Ser1190 and Ser1192 each carry phosphoserine.

As to quaternary structure, associates with components of the U1 and U2 U1 small nuclear ribonucleoprotein complexes. Phosphorylation regulates the subcellular localization. Phosphorylation of Ser-638 and Ser-640 in the RS (arginine/serine-rich) region promotes nuclear localization of the protein. In contrast, phosphorylation of the C-terminal disordered region promotes localization to cytoplasmic ribonucleoprotein granules.

The protein resides in the nucleus. It is found in the cytoplasm. Its subcellular location is the cytoplasmic ribonucleoprotein granule. Its function is as follows. RNA-binding protein that acts as a regulator of mRNA splicing of a subset of genes encoding key structural proteins involved in cardiac development, such as TTN (Titin), CACNA1C, CAMK2D or PDLIM5/ENH. Acts as a repressor of mRNA splicing: specifically binds the 5'UCUU-3' motif that is predominantly found within intronic sequences of pre-mRNAs, leading to the exclusion of specific exons in target transcripts. RBM20-mediated exon skipping is hormone-dependent and is essential for TTN isoform transition in both cardiac and skeletal muscles. RBM20-mediated exon skipping of TTN provides substrates for the formation of circular RNA (circRNAs) from the TTN transcripts. Together with RBM24, promotes the expression of short isoforms of PDLIM5/ENH in cardiomyocytes. In Rattus norvegicus (Rat), this protein is RNA-binding protein 20.